We begin with the raw amino-acid sequence, 339 residues long: MRMEKTTDKPLSAGDMNDEYSRGPIDDIDCLNFFERAVQDPCCEACDTEDADEELRAKLSSFNFQPDSSPCNAKCQQTLNPLCKIDEALPAESELAPSRNGSVSEANSDTNSIASTVHDPVDSKYGGMPSLRKAKTTSYFTSSSSNNTTMRNPLKKCNTNINGLLVNGRSSSSSRQSIPELFSGACTKKKNNVLLKSETPNSEFSSNSLQHCNSRSFSLPRSRSRSSAIAIPTHLYGLEKYVSPGLDTLTADPEESIERFSNNRPREISSCCPNDTGDTSSSLSHSNTSSSLNFPLGTNTNQFHQPRQPVQQQQSSKPNFGAGRKKSFIEMSLASSFAG.

Disordered regions lie at residues 1–20 and 94–156; these read MRME…NDEY and ELAP…PLKK. Polar residues predominate over residues 99–115; it reads RNGSVSEANSDTNSIAS. Positions 136–149 are enriched in low complexity; that stretch reads TTSYFTSSSSNNTT. Thr159 carries the post-translational modification Phosphothreonine. Residue Ser177 is modified to Phosphoserine. A compositionally biased stretch (polar residues) spans 198–213; the sequence is ETPNSEFSSNSLQHCN. Residues 198 to 224 are disordered; the sequence is ETPNSEFSSNSLQHCNSRSFSLPRSRS. The segment covering 214–224 has biased composition (low complexity); the sequence is SRSFSLPRSRS. Ser224 and Ser227 each carry phosphoserine. A disordered region spans residues 258–325; that stretch reads ERFSNNRPRE…SKPNFGAGRK (68 aa). Low complexity-rich tracts occupy residues 279 to 293 and 302 to 314; these read TSSS…SSLN and QFHQ…QQQQ.

Belongs to the ISF1/MBR1 family.

It is found in the mitochondrion. Functionally, participates in mitochondrial biogenesis and stress response. The chain is Mitochondrial biogenesis regulation protein 1 (MBR1) from Saccharomyces cerevisiae (strain ATCC 204508 / S288c) (Baker's yeast).